Consider the following 260-residue polypeptide: Hydroxyethylthiazole kinase (260 aa).

Met-38 is a binding site for substrate. Residues Arg-114 and Thr-159 each contribute to the ATP site. Gly-186 provides a ligand contact to substrate.

This sequence belongs to the Thz kinase family. It depends on Mg(2+) as a cofactor.

The enzyme catalyses 5-(2-hydroxyethyl)-4-methylthiazole + ATP = 4-methyl-5-(2-phosphooxyethyl)-thiazole + ADP + H(+). The protein operates within cofactor biosynthesis; thiamine diphosphate biosynthesis; 4-methyl-5-(2-phosphoethyl)-thiazole from 5-(2-hydroxyethyl)-4-methylthiazole: step 1/1. Its function is as follows. Catalyzes the phosphorylation of the hydroxyl group of 4-methyl-5-beta-hydroxyethylthiazole (THZ). The polypeptide is Hydroxyethylthiazole kinase (Helicobacter pylori (strain HPAG1)).